A 105-amino-acid chain; its full sequence is Vacuolar ATPase assembly integral membrane protein VMA21 homolog (105 aa).

The segment at 1-26 (MSTKNKKAAGGNGGAPKQTRQQSHDS) is disordered. Residues 1-36 (MSTKNKKAAGGNGGAPKQTRQQSHDSQDYSSFKTVL) lie on the Cytoplasmic side of the membrane. The helical transmembrane segment at 37–57 (FYCMLIVFLPVLTFFVLKGFV) threads the bilayer. Topologically, residues 58–68 (LDQFLDISEVK) are lumenal. The helical transmembrane segment at 69 to 89 (VNIASAVGAVVALHIALGLYI) threads the bilayer. Residues 90–105 (YRAYFGTTGSKASKTD) lie on the Cytoplasmic side of the membrane.

Belongs to the VMA21 family.

The protein localises to the endoplasmic reticulum membrane. It is found in the endoplasmic reticulum-Golgi intermediate compartment membrane. The protein resides in the cytoplasmic vesicle. Its subcellular location is the COPII-coated vesicle membrane. In terms of biological role, required for the assembly of the V0 complex of the vacuolar ATPase (V-ATPase) in the endoplasmic reticulum. The sequence is that of Vacuolar ATPase assembly integral membrane protein VMA21 homolog from Drosophila erecta (Fruit fly).